A 130-amino-acid polypeptide reads, in one-letter code: MIRNQYYGTGRRKSASARVFLRFGNGDIVINNLSLDKYFPKDNFQIIIKKPLEVTNVLNILDAYITVIGGGVSGQAGAISHGITRALLQYNAEFKSVLRATGLMTRDSRMVERKKVGLRKARRSPQFSKR.

The protein belongs to the universal ribosomal protein uS9 family.

The protein is Small ribosomal subunit protein uS9 of Blochmanniella floridana.